The chain runs to 348 residues: MSDRLTLLRPDDWHIHLRDGAVLPHTVGDVARTFARAIIMPNLVPPVRNVTEAGAYRERILAARPAGSRFEPLMVLYLTDRTSPEDVRAAKASGFVYAAKLYPAGATTNSDSGVTSIDNIFPAIEALAEVGMPLLVHGEVTRSEIDVFDREKRFIDEHMRRVVERFPTLKVVFEHITTSDAAQFVTEAPANVGATITAQHLLYNRNHMLVGGIRPHFYCLPILKRNTHQVALLDAATSGNPKFFLGTDSAPHARHAKEAACGCAGCYTAYAAIEMYAEAFEQRNALDKLEGFASLHGPAFYGLPANTDTITLVREEWTAPESLPFGEQTVVPLRAGEKLRWRLLEKNA.

His14 and His16 together coordinate Zn(2+). Substrate-binding positions include 16–18 (HLR) and Asn42. Zn(2+) is bound by residues Lys100, His137, and His175. Lys100 is modified (N6-carboxylysine). His137 serves as a coordination point for substrate. Leu220 lines the substrate pocket. Zn(2+) is bound at residue Asp248. The active site involves Asp248. Residues His252 and Ala264 each coordinate substrate.

Belongs to the metallo-dependent hydrolases superfamily. DHOase family. Class II DHOase subfamily. In terms of assembly, homodimer. Zn(2+) serves as cofactor.

The catalysed reaction is (S)-dihydroorotate + H2O = N-carbamoyl-L-aspartate + H(+). It participates in pyrimidine metabolism; UMP biosynthesis via de novo pathway; (S)-dihydroorotate from bicarbonate: step 3/3. In terms of biological role, catalyzes the reversible cyclization of carbamoyl aspartate to dihydroorotate. This is Dihydroorotase from Pseudomonas putida (strain ATCC 47054 / DSM 6125 / CFBP 8728 / NCIMB 11950 / KT2440).